A 333-amino-acid chain; its full sequence is MRTIAIDAMGGENAPEAIVKAVLKAKNEMPETKFLLFGDKEQLRELIPADQINDQLGVVATTETIADEDEPVKAIRRKKDSSMVVAANFVKEGKADALLSLGNTGALLACGIFIIGRIKGIVRPGLMPTLPVQNSDDGFNMVDVGANAKSKPEYLLQWAEMASYYAQKIRGIDNPRIALLNNGAESDKGDDVHQKAYELLKDSDLNFVGNIEGNELLLGNADVVVTDGFTGNAVLKNIEGTSSVILHLLKDSLLNGNLMTKMGALMVKGSLASLKSKFDTAKYGGAVLLGVNAPVVKTHGRSNERPIYYTLKQVDKMIKEKLVEDFRDEFSEK.

It belongs to the PlsX family. As to quaternary structure, homodimer. Probably interacts with PlsY.

It is found in the cytoplasm. It carries out the reaction a fatty acyl-[ACP] + phosphate = an acyl phosphate + holo-[ACP]. The protein operates within lipid metabolism; phospholipid metabolism. Functionally, catalyzes the reversible formation of acyl-phosphate (acyl-PO(4)) from acyl-[acyl-carrier-protein] (acyl-ACP). This enzyme utilizes acyl-ACP as fatty acyl donor, but not acyl-CoA. This is Phosphate acyltransferase from Lactobacillus acidophilus (strain ATCC 700396 / NCK56 / N2 / NCFM).